Reading from the N-terminus, the 318-residue chain is L-carnitine dehydrogenase (318 aa).

14 to 19 (GSGVIG) contributes to the NAD(+) binding site.

The protein belongs to the 3-hydroxyacyl-CoA dehydrogenase family. L-carnitine dehydrogenase subfamily. In terms of assembly, homodimer.

Its subcellular location is the cytoplasm. It catalyses the reaction carnitine + NAD(+) = 3-dehydrocarnitine + NADH + H(+). The protein operates within amine and polyamine metabolism; carnitine metabolism. In terms of biological role, catalyzes the NAD(+)-dependent oxidation of L-carnitine to 3-dehydrocarnitine. The polypeptide is L-carnitine dehydrogenase (Pseudomonas syringae pv. syringae (strain B728a)).